A 394-amino-acid polypeptide reads, in one-letter code: Probable acetyl-CoA acyltransferase (394 aa).

Cys88 (acyl-thioester intermediate) is an active-site residue. Residues His349 and Cys378 each act as proton acceptor in the active site.

This sequence belongs to the thiolase-like superfamily. Thiolase family.

The protein resides in the cytoplasm. It catalyses the reaction 2 acetyl-CoA = acetoacetyl-CoA + CoA. The sequence is that of Probable acetyl-CoA acyltransferase from Staphylococcus epidermidis (strain ATCC 35984 / DSM 28319 / BCRC 17069 / CCUG 31568 / BM 3577 / RP62A).